The following is a 362-amino-acid chain: Putative protein ARB2BP (362 aa).

The chain crosses the membrane as a helical span at residues 229–245 (IAFIVHGYGGLVFMDLL).

This sequence belongs to the ARB2 family.

The protein localises to the membrane. The sequence is that of Putative protein ARB2BP from Homo sapiens (Human).